Reading from the N-terminus, the 273-residue chain is 4-hydroxy-tetrahydrodipicolinate reductase (273 aa).

NAD(+) contacts are provided by residues 8-13 (GAAGRM), Glu34, 102-104 (GTT), and 128-131 (SSNM). The active-site Proton donor/acceptor is His160. His161 is a binding site for (S)-2,3,4,5-tetrahydrodipicolinate. The Proton donor role is filled by Lys164. A (S)-2,3,4,5-tetrahydrodipicolinate-binding site is contributed by 170–171 (GT).

Belongs to the DapB family.

It localises to the cytoplasm. It catalyses the reaction (S)-2,3,4,5-tetrahydrodipicolinate + NAD(+) + H2O = (2S,4S)-4-hydroxy-2,3,4,5-tetrahydrodipicolinate + NADH + H(+). It carries out the reaction (S)-2,3,4,5-tetrahydrodipicolinate + NADP(+) + H2O = (2S,4S)-4-hydroxy-2,3,4,5-tetrahydrodipicolinate + NADPH + H(+). It functions in the pathway amino-acid biosynthesis; L-lysine biosynthesis via DAP pathway; (S)-tetrahydrodipicolinate from L-aspartate: step 4/4. In terms of biological role, catalyzes the conversion of 4-hydroxy-tetrahydrodipicolinate (HTPA) to tetrahydrodipicolinate. The sequence is that of 4-hydroxy-tetrahydrodipicolinate reductase from Methanobrevibacter smithii (strain ATCC 35061 / DSM 861 / OCM 144 / PS).